The following is a 134-amino-acid chain: MKKIASYYLMTLGLSSLTFGLLLGFYSFVMYGDMIIALFTAAIALLYGFVVYGLFAVPLQMKLQKKARTFNVMYLLIYSVVAFIAAFLFFVINEPASIAWTLQSYFYYMLSIAAAVIYWLWDSLILYKRTASGV.

A run of 4 helical transmembrane segments spans residues 9 to 29 (LMTL…YSFV), 35 to 55 (IIAL…YGLF), 72 to 92 (VMYL…FFVI), and 106 to 126 (FYYM…SLIL).

This sequence belongs to the UPF0715 family.

It is found in the cell membrane. The polypeptide is UPF0715 membrane protein YoaG (yoaG) (Bacillus subtilis (strain 168)).